A 322-amino-acid polypeptide reads, in one-letter code: Protein mono-ADP-ribosyltransferase PARP16 (322 aa).

The Cytoplasmic segment spans residues 1–287; it reads MQLSNRAAAR…RASSQLSWLS (287 aa). The PARP alpha-helical domain occupies 5 to 91; sequence NRAAAREAAS…AWDLVSWILS (87 aa). Positions 94-279 constitute a PARP catalytic domain; it reads ILTIHSAKKA…VYSQKQPKRA (186 aa). Residues H152, Y182, and Y254 each coordinate NAD(+). A helical membrane pass occupies residues 288 to 308; sequence SHWFVIMMSLYLLLLLIVSVT. Topologically, residues 309 to 322 are lumenal; sequence NSSVFHHFWNRVKR.

This sequence belongs to the ARTD/PARP family. As to quaternary structure, interacts with KPNB1. Post-translationally, auto-mono-ADP-ribosylated.

The protein localises to the endoplasmic reticulum membrane. The catalysed reaction is L-aspartyl-[protein] + NAD(+) = 4-O-(ADP-D-ribosyl)-L-aspartyl-[protein] + nicotinamide. The enzyme catalyses L-lysyl-[protein] + NAD(+) = N(6)-(ADP-D-ribosyl)-L-lysyl-[protein] + nicotinamide + H(+). It catalyses the reaction L-glutamyl-[protein] + NAD(+) = 5-O-(ADP-D-ribosyl)-L-glutamyl-[protein] + nicotinamide. In absence of activation signal, PARP16 is autoinhibited by the PARP alpha-helical domain (also named HD region), which prevents effective NAD(+)-binding. Activity is highly stimulated by signals, which unfold the PARP alpha-helical domain, relieving autoinhibition. Intracellular mono-ADP-ribosyltransferase that plays a role in different processes, such as protein translation and unfolded protein response (UPR), through the mono-ADP-ribosylation of proteins involved in those processes. Acts as an inhibitor of protein translation by catalyzing mono-ADP-ribosylation of ribosomal subunits, such as RPL14 and RPS6, thereby inhibiting polysome assembly and mRNA loading. Mono-ADP-ribosylation of ribosomal subunits is promoted by NMNAT2. Involved in the unfolded protein response (UPR) by ADP-ribosylating and activating EIF2AK3 and ERN1, two important UPR effectors. May also mediate mono-ADP-ribosylation of karyopherin KPNB1 a nuclear import factor. May not modify proteins on arginine or cysteine residues compared to other mono-ADP-ribosyltransferases. This is Protein mono-ADP-ribosyltransferase PARP16 from Mus musculus (Mouse).